A 223-amino-acid chain; its full sequence is Large ribosomal subunit protein bL25 (223 aa).

It belongs to the bacterial ribosomal protein bL25 family. CTC subfamily. As to quaternary structure, part of the 50S ribosomal subunit; part of the 5S rRNA/L5/L18/L25 subcomplex. Contacts the 5S rRNA. Binds to the 5S rRNA independently of L5 and L18.

In terms of biological role, this is one of the proteins that binds to the 5S RNA in the ribosome where it forms part of the central protuberance. This chain is Large ribosomal subunit protein bL25, found in Albidiferax ferrireducens (strain ATCC BAA-621 / DSM 15236 / T118) (Rhodoferax ferrireducens).